We begin with the raw amino-acid sequence, 510 residues long: Monocarboxylate transporter 14 (510 aa).

The Cytoplasmic portion of the chain corresponds to 1–27 (MYTSHEDIGYDFEDGPKDKKTLKPHPN). 6 consecutive transmembrane segments (helical) span residues 28–48 (IDGGWAWMMVLSSFFVHILIM), 74–94 (WVSSLSMGITLIVGPFIGLFI), 103–123 (AIIGGLVNSLGWVLSAYAANV), 127–147 (FITFGVAAGLGSGMAYLPAVV), 159–179 (LAQGLSTTGTGFGTFLMTVLL), and 191–209 (AMLIQGAVSLNLCVCGALM). Positions 214–255 (PGKNPNDPGEKDVRGLPAHSTESVKSTGQQGRTEEKDGGLGN) are disordered. A compositionally biased stretch (polar residues) spans 233-244 (STESVKSTGQQG). A run of 6 helical transmembrane segments spans residues 315–335 (MFVAFIFWALFAYSSFVIPFI), 353–373 (FPLTSIIAIVHIFGKVILGVI), 379–399 (ISVWNVFLLANFTLVLSIFIL), 408–428 (LAVICALIGFSSGYFSLMPVV), 443–463 (GIIICANGISALLGPPFAGWI), and 474–494 (FYICGLLYMIGILFLLIQPCI). Over 495 to 510 (RIIEQSRRKYMDGAHV) the chain is Cytoplasmic.

Belongs to the major facilitator superfamily. Monocarboxylate porter (TC 2.A.1.13) family.

The protein resides in the cell membrane. In terms of biological role, proton-linked monocarboxylate transporter. May catalyze the transport of monocarboxylates across the plasma membrane. The sequence is that of Monocarboxylate transporter 14 (SLC16A14) from Homo sapiens (Human).